The primary structure comprises 319 residues: Tetrahydromethanopterin S-methyltransferase subunit H (319 aa).

It belongs to the MtrH family. The complex is composed of 8 subunits; MtrA, MtrB, MtrC, MtrD, MtrE, MtrF, MtrG and MtrH.

The enzyme catalyses 5-methyl-5,6,7,8-tetrahydromethanopterin + coenzyme M + 2 Na(+)(in) = 5,6,7,8-tetrahydromethanopterin + methyl-coenzyme M + 2 Na(+)(out). Its pathway is one-carbon metabolism; methanogenesis from CO(2); methyl-coenzyme M from 5,10-methylene-5,6,7,8-tetrahydromethanopterin: step 2/2. Part of a complex that catalyzes the formation of methyl-coenzyme M and tetrahydromethanopterin from coenzyme M and methyl-tetrahydromethanopterin. This is an energy-conserving, sodium-ion translocating step. MtrH catalyzes the transfer of the methyl group from methyl-tetrahydromethanopterin to the corrinoid prosthetic group of MtrA. The polypeptide is Tetrahydromethanopterin S-methyltransferase subunit H (Methanocaldococcus jannaschii (strain ATCC 43067 / DSM 2661 / JAL-1 / JCM 10045 / NBRC 100440) (Methanococcus jannaschii)).